The following is an 840-amino-acid chain: Wings apart-like protein 2 (840 aa).

3 disordered regions span residues 1-37, 56-78, and 532-594; these read MMER…EPVD, SDND…FGSN, and FDLE…DHHV. Positions 546–557 are enriched in basic residues; it reads KQKKSKGQKRKG. The segment covering 558-567 has biased composition (basic and acidic residues); it reads SYRDKKDERS. Polar residues predominate over residues 569–585; sequence QLFSSQEESNHGLNSQE. The WAPL domain occupies 764 to 819; the sequence is KEAEKMIVEAYSALLLAFLSTESRSIRNAIRDYLPKRDMAILVPVLDRFVAFHTTL.

The protein belongs to the WAPL family. In terms of assembly, interacts with the cohesin complex throughout the cell cycle. Expressed in roots, leaves, buds and siliques.

Its subcellular location is the nucleus. The protein localises to the chromosome. Regulator of sister chromatid cohesion in meiosis which negatively regulates cohesin association with chromatin, acting as an antagonist of CTF7. Cohesion ensures that chromosome partitioning is accurate in both meiotic and mitotic cells and plays an important role in DNA repair. Essential for the prophase removal of cohesin during meiosis thus determining the timely release of meiotic cohesion. Important for proper spindle attachment and assembly during meiosis. Helps to prevent abnormal centromere association during prophase I in meiocytes. Required for early embryonic patterning. Also involved in chromosome segregation during mitosis. The polypeptide is Wings apart-like protein 2 (Arabidopsis thaliana (Mouse-ear cress)).